A 239-amino-acid polypeptide reads, in one-letter code: MKDDVLKQQAHAAIQKKLGYAFRDISLLRQALTHRSHHAKHNERFEFVGDSILNYTVARMLFDAFPKLTEGELSRLRASLVNEGVLAEMAAEMNVGDGLYLGAGELKSGGFRRPSILADAMEAMFAAVSFDADFNTAEKVVRHLFAERVRRVDFQNQAKDGKTALQEALQARRFALPKYRIEEQIGHANDSMFVISCDLGELGFVCRAKGTSRKAAEQEAAKEALKWLEEKLPLKKKKK.

The RNase III domain occupies 11-133 (HAAIQKKLGY…MFAAVSFDAD (123 aa)). Glu-46 provides a ligand contact to Mg(2+). The active site involves Asp-50. Mg(2+) is bound by residues Asp-119 and Glu-122. Glu-122 is a catalytic residue. A DRBM domain is found at 160-230 (DGKTALQEAL…AKEALKWLEE (71 aa)).

It belongs to the ribonuclease III family. In terms of assembly, homodimer. The cofactor is Mg(2+).

Its subcellular location is the cytoplasm. It catalyses the reaction Endonucleolytic cleavage to 5'-phosphomonoester.. Its function is as follows. Digests double-stranded RNA. Involved in the processing of primary rRNA transcript to yield the immediate precursors to the large and small rRNAs (23S and 16S). Also processes some mRNAs, and tRNAs when they are encoded in the rRNA operon. In terms of biological role, CRISPR (clustered regularly interspaced short palindromic repeat) is an adaptive immune system that provides protection against mobile genetic elements (viruses, transposable elements and conjugative plasmids). CRISPR clusters contain spacers, sequences complementary to antecedent mobile elements, and target invading nucleic acids. CRISPR clusters are transcribed and processed into CRISPR RNA (crRNA). In this organism endogenous ribonuclease 3 and Cas9 are required for correct coprocessing of pre-crRNA and the trans-encoded small RNA (tracrRNA). Cas9, crRNA and tracrRNA are required for cleavage of invading DNA. Complements pre-crRNA and tracrRNA coprocessing defects in an rnc deletion in S.pyogenes strain 370. This is Ribonuclease 3 from Neisseria meningitidis serogroup A / serotype 4A (strain DSM 15465 / Z2491).